A 445-amino-acid polypeptide reads, in one-letter code: MDIRQVTETIAMIEEQNFDIRTITMGISLLDCIDPDINRAAEKIYQKITTKAANLVAVGDEIAAELGIPIVNKRVSVTPISLIGAATDATDYVVLAKALDKAAKEIGVDFIGGFSALVQKGYQKGDEILINSIPRALTETDKVCSSVNIGSTKSGINMTAVADMGRIIKETANLSDMGAAKLVVFANAVEDNPFMAGAFHGVGEADVIINVGVSGPGVVKRALEKVRGQSFDVVAETVKKTAFKITRIGQLVGQMASERLGVEFGIVDLSLAPTPAVGDSVARVLEEMGLETVGTHGTTAALALLNDQVKKGGVMACNQVGGLSGAFIPVSEDEGMIAAVQNGSLNLEKLEAMTAICSVGLDMIAIPEDTPAETIAAMIADEAAIGVINMKTTAVRIIPKGREGDMIEFGGLLGTAPVMKVNGASSVDFISRGGQIPAPIHSFKN.

Belongs to the UPF0210 family. In terms of assembly, homodimer.

The sequence is that of UPF0210 protein SPJ_0248 from Streptococcus pneumoniae (strain JJA).